A 110-amino-acid chain; its full sequence is Eukaryotic translation initiation factor eIF1 (110 aa).

The protein belongs to the SUI1 family.

In terms of biological role, probably involved in translation. The chain is Eukaryotic translation initiation factor eIF1 from Anopheles gambiae (African malaria mosquito).